The primary structure comprises 144 residues: Large ribosomal subunit protein uL13 (144 aa).

Belongs to the universal ribosomal protein uL13 family. Part of the 50S ribosomal subunit.

This protein is one of the early assembly proteins of the 50S ribosomal subunit, although it is not seen to bind rRNA by itself. It is important during the early stages of 50S assembly. This is Large ribosomal subunit protein uL13 from Nitrosospira multiformis (strain ATCC 25196 / NCIMB 11849 / C 71).